The primary structure comprises 550 residues: Chaperonin GroEL (550 aa).

Residues 30 to 33, lysine 51, 87 to 91, glycine 415, 480 to 482, and aspartate 496 each bind ATP; these read TLGP, DGTTT, and NAA.

It belongs to the chaperonin (HSP60) family. In terms of assembly, forms a cylinder of 14 subunits composed of two heptameric rings stacked back-to-back. Interacts with the co-chaperonin GroES.

It localises to the cytoplasm. The enzyme catalyses ATP + H2O + a folded polypeptide = ADP + phosphate + an unfolded polypeptide.. Together with its co-chaperonin GroES, plays an essential role in assisting protein folding. The GroEL-GroES system forms a nano-cage that allows encapsulation of the non-native substrate proteins and provides a physical environment optimized to promote and accelerate protein folding. This Variovorax paradoxus (strain S110) protein is Chaperonin GroEL.